We begin with the raw amino-acid sequence, 220 residues long: Germin-like protein subfamily T member 2 (220 aa).

The N-terminal stretch at 1–27 (MTTLQISSSLFRSFLLVICVFVIPSLS) is a signal peptide. Cysteine 37 and cysteine 52 form a disulfide bridge. Residues 64–212 (SGLGGPLNTS…TFRTDDVTVN (149 aa)) enclose the Cupin type-1 domain. The N-linked (GlcNAc...) asparagine glycan is linked to asparagine 71. The Mn(2+) site is built by histidine 112, histidine 114, and glutamate 119. Asparagine 136 is a glycosylation site (N-linked (GlcNAc...) asparagine). Mn(2+) is bound at residue histidine 158.

Belongs to the germin family. In terms of assembly, oligomer (believed to be a pentamer but probably hexamer).

It is found in the secreted. Its subcellular location is the extracellular space. It localises to the apoplast. Functionally, may play a role in plant defense. Probably has no oxalate oxidase activity even if the active site is conserved. In Arabidopsis thaliana (Mouse-ear cress), this protein is Germin-like protein subfamily T member 2.